The primary structure comprises 106 residues: HIG1 domain family member 2B (106 aa).

At 1–46 (MATLGFVTPEAPFESSKPPIFEGLSPTVYSNPEGFKEKFLRKTREN) the chain is on the cytoplasmic side. One can recognise an HIG1 domain in the interval 20–106 (IFEGLSPTVY…LAATAMKSPP (87 aa)). A helical transmembrane segment spans residues 47–67 (PVVPIGFLCTAAVLTNGLYCF). Residues 68-81 (HQGNSQCSRLMMHT) lie on the Extracellular side of the membrane. Residues 82–102 (QIAAQGFTIAAILLGLAATAM) form a helical membrane-spanning segment. Topologically, residues 103–106 (KSPP) are cytoplasmic.

The protein localises to the membrane. In Homo sapiens (Human), this protein is HIG1 domain family member 2B (HIGD2B).